Reading from the N-terminus, the 963-residue chain is Glycine dehydrogenase (decarboxylating) (963 aa).

The residue at position 710 (Lys710) is an N6-(pyridoxal phosphate)lysine.

It belongs to the GcvP family. As to quaternary structure, the glycine cleavage system is composed of four proteins: P, T, L and H. The cofactor is pyridoxal 5'-phosphate.

It catalyses the reaction N(6)-[(R)-lipoyl]-L-lysyl-[glycine-cleavage complex H protein] + glycine + H(+) = N(6)-[(R)-S(8)-aminomethyldihydrolipoyl]-L-lysyl-[glycine-cleavage complex H protein] + CO2. Its function is as follows. The glycine cleavage system catalyzes the degradation of glycine. The P protein binds the alpha-amino group of glycine through its pyridoxal phosphate cofactor; CO(2) is released and the remaining methylamine moiety is then transferred to the lipoamide cofactor of the H protein. This Pseudoalteromonas translucida (strain TAC 125) protein is Glycine dehydrogenase (decarboxylating).